A 91-amino-acid polypeptide reads, in one-letter code: Potassium channel toxin TstKMK (91 aa).

Positions 1 to 25 (MVATNRCCVFALLFALLLVHSLTEA) are cleaved as a signal peptide. A propeptide spanning residues 26 to 42 (GKGKEILGKIKEKIIEA) is cleaved from the precursor. A BetaSPN-type CS-alpha/beta domain is found at 58–91 (EYACPAIDKFCEDHCAAKKAVGKCDDFKCKCIKL). Intrachain disulfides connect cysteine 61–cysteine 81, cysteine 68–cysteine 86, and cysteine 72–cysteine 88.

This sequence belongs to the long chain scorpion toxin family. Class 2 subfamily. In terms of tissue distribution, expressed by the venom gland.

The protein resides in the secreted. Its function is as follows. The full peptide presents antibacterial and cytotoxic activities. The synthetic C-terminus (AA 33-76) inhibits voltage-gated potassium channels Kv1.1/KCNA1, Kv1.2/KCNA2, and Kv1.3/KCNA3. The sequence is that of Potassium channel toxin TstKMK from Tityus stigmurus (Brazilian scorpion).